The sequence spans 221 residues: 7-cyano-7-deazaguanine synthase (221 aa).

7-17 lines the ATP pocket; that stretch reads LSGGMDSSTLA. The Zn(2+) site is built by Cys-187, Cys-195, Cys-198, and Cys-201.

The protein belongs to the QueC family. Requires Zn(2+) as cofactor.

The catalysed reaction is 7-carboxy-7-deazaguanine + NH4(+) + ATP = 7-cyano-7-deazaguanine + ADP + phosphate + H2O + H(+). The protein operates within purine metabolism; 7-cyano-7-deazaguanine biosynthesis. Its function is as follows. Catalyzes the ATP-dependent conversion of 7-carboxy-7-deazaguanine (CDG) to 7-cyano-7-deazaguanine (preQ(0)). The sequence is that of 7-cyano-7-deazaguanine synthase from Methanosphaerula palustris (strain ATCC BAA-1556 / DSM 19958 / E1-9c).